A 159-amino-acid chain; its full sequence is Ribosome-binding factor A (159 aa).

Residues Thr127–Ser159 form a disordered region. A compositionally biased stretch (acidic residues) spans Asp142–Ser159.

The protein belongs to the RbfA family. In terms of assembly, monomer. Binds 30S ribosomal subunits, but not 50S ribosomal subunits or 70S ribosomes.

The protein localises to the cytoplasm. In terms of biological role, one of several proteins that assist in the late maturation steps of the functional core of the 30S ribosomal subunit. Associates with free 30S ribosomal subunits (but not with 30S subunits that are part of 70S ribosomes or polysomes). Required for efficient processing of 16S rRNA. May interact with the 5'-terminal helix region of 16S rRNA. The polypeptide is Ribosome-binding factor A (Beutenbergia cavernae (strain ATCC BAA-8 / DSM 12333 / CCUG 43141 / JCM 11478 / NBRC 16432 / NCIMB 13614 / HKI 0122)).